The following is a 293-amino-acid chain: 4-hydroxy-tetrahydrodipicolinate synthase (293 aa).

Thr-47 serves as a coordination point for pyruvate. Catalysis depends on Tyr-135, which acts as the Proton donor/acceptor. The active-site Schiff-base intermediate with substrate is the Lys-164. Ile-206 contributes to the pyruvate binding site.

This sequence belongs to the DapA family. As to quaternary structure, homotetramer; dimer of dimers.

The protein resides in the cytoplasm. It carries out the reaction L-aspartate 4-semialdehyde + pyruvate = (2S,4S)-4-hydroxy-2,3,4,5-tetrahydrodipicolinate + H2O + H(+). The protein operates within amino-acid biosynthesis; L-lysine biosynthesis via DAP pathway; (S)-tetrahydrodipicolinate from L-aspartate: step 3/4. Its function is as follows. Catalyzes the condensation of (S)-aspartate-beta-semialdehyde [(S)-ASA] and pyruvate to 4-hydroxy-tetrahydrodipicolinate (HTPA). This chain is 4-hydroxy-tetrahydrodipicolinate synthase, found in Flavobacterium psychrophilum (strain ATCC 49511 / DSM 21280 / CIP 103535 / JIP02/86).